A 345-amino-acid chain; its full sequence is UPF0324 membrane protein HH_1161 (345 aa).

The next 10 helical transmembrane spans lie at 7–29 (GFLYGILFLAFFSLLSLFISATL), 33–50 (LSPLIIGILLGAALSPFY), 90–112 (LGLNGFLISLFIVAGVFIAAIFI), 122–141 (ISLLVGIGSAVCGAAAILAL), 154–176 (VALGFIVIFGLIGMILLPAIYYA), 186–208 (WGIFIGASLHEVANVVGAAAISP), 215–237 (IIVKMTRVVLLVPLLLIISYIIF), 262–281 (LYIPYFAFGFLGVIVLNSFI), 293–312 (FASKICLVFAMVALGLQIDW), and 322–344 (TFALALILFIILMFGTYGLVYIM).

Belongs to the UPF0324 family.

Its subcellular location is the cell membrane. This Helicobacter hepaticus (strain ATCC 51449 / 3B1) protein is UPF0324 membrane protein HH_1161.